Here is a 435-residue protein sequence, read N- to C-terminus: Methylenetetrahydrofolate--tRNA-(uracil-5-)-methyltransferase TrmFO (435 aa).

9–14 (GAGLAG) provides a ligand contact to FAD.

It belongs to the MnmG family. TrmFO subfamily. Requires FAD as cofactor.

The protein localises to the cytoplasm. The catalysed reaction is uridine(54) in tRNA + (6R)-5,10-methylene-5,6,7,8-tetrahydrofolate + NADH + H(+) = 5-methyluridine(54) in tRNA + (6S)-5,6,7,8-tetrahydrofolate + NAD(+). The enzyme catalyses uridine(54) in tRNA + (6R)-5,10-methylene-5,6,7,8-tetrahydrofolate + NADPH + H(+) = 5-methyluridine(54) in tRNA + (6S)-5,6,7,8-tetrahydrofolate + NADP(+). In terms of biological role, catalyzes the folate-dependent formation of 5-methyl-uridine at position 54 (M-5-U54) in all tRNAs. The protein is Methylenetetrahydrofolate--tRNA-(uracil-5-)-methyltransferase TrmFO of Staphylococcus haemolyticus (strain JCSC1435).